The following is a 380-amino-acid chain: Dynactin subunit 2 (380 aa).

The segment at 1-32 (MADPKFQNLPGIAYDQPDVYETPDDPELDTSD) is disordered. Acidic residues predominate over residues 21–32 (ETPDDPELDTSD). A phosphoserine mark is found at Ser-49, Ser-58, and Ser-86. 2 coiled-coil regions span residues 100 to 135 (VQKCQRLQIEMNELLNEVAALQVDRKVADEEKQSYD) and 353 to 377 (ETFAQNLETINSKVAKVEQRVAAIS).

It belongs to the dynactin subunit 2 family. Subunit of dynactin, a multiprotein complex associated with dynein.

It is found in the cytoplasm. The protein localises to the cytoskeleton. The protein resides in the membrane. Functionally, modulates cytoplasmic dynein binding to an organelle, and plays a role in prometaphase chromosome alignment and spindle organization during mitosis. May play a role in synapse formation during brain development. This is Dynactin subunit 2 from Drosophila melanogaster (Fruit fly).